Here is a 649-residue protein sequence, read N- to C-terminus: Leucine-rich repeat transmembrane protein FLRT3 (649 aa).

Positions 1–28 (MISAAWSIFLIGTKIGLFLQVAPLSVMA) are cleaved as a signal peptide. The region spanning 29 to 58 (KSCPSVCRCDAGFIYCNDRFLTSIPTGIPE) is the LRRNT domain. Residues 29-528 (KSCPSVCRCD…KEPYKNPNLP (500 aa)) are Extracellular-facing. Intrachain disulfides connect cysteine 31–cysteine 37 and cysteine 35–cysteine 44. The tract at residues 38–67 (DAGFIYCNDRFLTSIPTGIPEDATTLYLQN) is interaction with ADGRL3. 10 LRR repeats span residues 59-80 (DATTLYLQNNQINNAGIPSDLK), 84-104 (KVERIYLYHNSLDEFPTNLPK), 105-126 (YVKELHLQENNIRTITYDSLSK), 129-150 (YLEELHLDDNSVSAVSIEEGAF), 155-175 (YLRLLFLSRNHLSTIPWGLPR), 176-197 (TIEELRLDDNRISTISSPSLQG), 200-220 (SLKRLVLDGNLLNNHGLGDKV), 226-247 (NLTELSLVRNSLTAAPVNLPGT), 248-269 (NLRKLYLQDNHINRVPPNAFSY), and 272-293 (QLYRLDMSNNNLSNLPQGIFDD). Asparagine 226 carries N-linked (GlcNAc...) asparagine glycosylation. N-linked (GlcNAc...) asparagine glycosylation is found at asparagine 282 and asparagine 296. The LRRCT domain occupies 305–357 (NPWYCGCKMKWVRDWLQSLPVKVNVRGLMCQAPEKVRGMAIKDLNAELFDCKD). Cysteine 309 and cysteine 334 are joined by a disulfide. The segment at 387–407 (KQPDIKNPKLTKDHQTTGSPS) is disordered. Residues 389–401 (PDIKNPKLTKDHQ) are compositionally biased toward basic and acidic residues. The 96-residue stretch at 409–504 (KTITITVKSV…VCIETETAPL (96 aa)) folds into the Fibronectin type-III domain. Residues 529-549 (LAAIIGGAVALVTIALLALVC) traverse the membrane as a helical segment. Residues 550–649 (WYVHRNGSLF…GIPDSDHSHS (100 aa)) are Cytoplasmic-facing. Residues 622 to 649 (LYKNNHSESSSNRSYRDSGIPDSDHSHS) form a disordered region.

In terms of assembly, monomer and homodimer. Self-associates (via leucine-rich repeats), giving rise to homooligomers. Interacts with FGFR1. Interacts (via extracellular domain) with ADGRL1/LPHN1 and LPHN2 (via olfactomedin-like domain). Interacts (via extracellular domain) with ADGRL3 (via olfactomedin-like domain); the interaction is direct. Interacts (via extracellular domain) with UNC5B and UNC5D (via extracellular domain); the interaction is direct. Identified in complexes composed of FLRT3, ADGRL3 and UNC5B, respectively FLRT3, ADGRL3 and UNC5D. May also interact (via extracellular domain) with UNC5A and UNC5C. Interacts (via cytoplasmic domain) with ROBO1. Post-translationally, N-glycosylated. Proteolytic cleavage in the juxtamembrane region gives rise to a soluble ectodomain. Cleavage is probably effected by a metalloprotease. In terms of tissue distribution, expressed in kidney, brain, pancreas, skeletal muscle, lung, liver, placenta, and heart.

It is found in the cell membrane. Its subcellular location is the presynaptic cell membrane. The protein resides in the endoplasmic reticulum membrane. The protein localises to the cell junction. It localises to the focal adhesion. It is found in the secreted. Its subcellular location is the cell projection. The protein resides in the axon. The protein localises to the growth cone membrane. Functionally, functions in cell-cell adhesion, cell migration and axon guidance, exerting an attractive or repulsive role depending on its interaction partners. Plays a role in the spatial organization of brain neurons. Plays a role in vascular development in the retina. Plays a role in cell-cell adhesion via its interaction with ADGRL3 and probably also other latrophilins that are expressed at the surface of adjacent cells. Interaction with the intracellular domain of ROBO1 mediates axon attraction towards cells expressing NTN1. Mediates axon growth cone collapse and plays a repulsive role in neuron guidance via its interaction with UNC5B, and possibly also other UNC-5 family members. Promotes neurite outgrowth (in vitro). Mediates cell-cell contacts that promote an increase both in neurite number and in neurite length. Plays a role in the regulation of the density of glutamaergic synapses. Plays a role in fibroblast growth factor-mediated signaling cascades. Required for normal morphogenesis during embryonic development, but not for normal embryonic patterning. Required for normal ventral closure, headfold fusion and definitive endoderm migration during embryonic development. Required for the formation of a normal basement membrane and the maintenance of a normal anterior visceral endoderm during embryonic development. This chain is Leucine-rich repeat transmembrane protein FLRT3 (FLRT3), found in Homo sapiens (Human).